Reading from the N-terminus, the 371-residue chain is Cytochrome b (371 aa).

Transmembrane regions (helical) follow at residues 25–45 (FGSM…FLAV), 69–90 (WIMQ…YIHI), 105–125 (WLSG…GYVL), and 170–190 (FFAL…IHII). Heme b-binding residues include His-75 and His-89. Residues His-174 and His-188 each coordinate heme b. His-193 provides a ligand contact to a ubiquinone. 4 helical membrane passes run 218–238 (YKDM…LSFM), 280–300 (LGGT…PFTH), 312–332 (LTQA…WTAT), and 339–358 (FTLI…IINP).

This sequence belongs to the cytochrome b family. In terms of assembly, the cytochrome bc1 complex contains 3 respiratory subunits (MT-CYB, CYC1 and UQCRFS1), 2 core proteins (UQCRC1 and UQCRC2) and probably 6 low-molecular weight proteins. Heme b serves as cofactor.

It localises to the mitochondrion inner membrane. Component of the ubiquinol-cytochrome c reductase complex (complex III or cytochrome b-c1 complex) that is part of the mitochondrial respiratory chain. The b-c1 complex mediates electron transfer from ubiquinol to cytochrome c. Contributes to the generation of a proton gradient across the mitochondrial membrane that is then used for ATP synthesis. This Toxicocalamus preussi (Preuss's forest snake) protein is Cytochrome b (MT-CYB).